We begin with the raw amino-acid sequence, 405 residues long: Protein PAG1 (405 aa).

The signal sequence occupies residues 1 to 50 (MVSLIILFRLTFAIANRVRTLMKVLVIVSFFVLTGSASADSGALSLSGAA). Residues asparagine 55, asparagine 104, asparagine 256, and asparagine 351 are each glycosylated (N-linked (GlcNAc...) asparagine). Alanine 391 is lipidated: GPI-anchor amidated alanine. Residues 392 to 405 (DSLRRTLALLFLLF) constitute a propeptide, removed in mature form.

The protein resides in the cell membrane. This is Protein PAG1 (PAG1) from Trypanosoma brucei brucei.